Consider the following 186-residue polypeptide: Elongation factor P (186 aa).

Lys-33 is subject to N6-(3,6-diaminohexanoyl)-5-hydroxylysine.

It belongs to the elongation factor P family. In terms of processing, may be beta-lysylated on the epsilon-amino group of Lys-33 by the combined action of EpmA and EpmB, and then hydroxylated on the C5 position of the same residue by EpmC (if this protein is present). Lysylation is critical for the stimulatory effect of EF-P on peptide-bond formation. The lysylation moiety may extend toward the peptidyltransferase center and stabilize the terminal 3-CCA end of the tRNA. Hydroxylation of the C5 position on Lys-33 may allow additional potential stabilizing hydrogen-bond interactions with the P-tRNA.

It is found in the cytoplasm. It functions in the pathway protein biosynthesis; polypeptide chain elongation. Its function is as follows. Involved in peptide bond synthesis. Alleviates ribosome stalling that occurs when 3 or more consecutive Pro residues or the sequence PPG is present in a protein, possibly by augmenting the peptidyl transferase activity of the ribosome. Modification of Lys-33 is required for alleviation. The protein is Elongation factor P of Acidithiobacillus ferrooxidans (strain ATCC 23270 / DSM 14882 / CIP 104768 / NCIMB 8455) (Ferrobacillus ferrooxidans (strain ATCC 23270)).